Consider the following 604-residue polypeptide: Acetylcholinesterase 4 (604 aa).

The signal sequence occupies residues 1 to 23 (MKPKLVFLPFLIFITVFIEESEA). Cysteines 88 and 115 form a disulfide. Residues N96 and N128 are each glycosylated (N-linked (GlcNAc...) asparagine). The active-site Acyl-ester intermediate is S219. Cysteines 273 and 284 form a disulfide. Residues N274 and N299 are each glycosylated (N-linked (GlcNAc...) asparagine). E347 functions as the Charge relay system in the catalytic mechanism. N-linked (GlcNAc...) asparagine glycans are attached at residues N400 and N446. Cysteines 426 and 561 form a disulfide. H477 serves as the catalytic Charge relay system.

Belongs to the type-B carboxylesterase/lipase family.

The protein localises to the synapse. It is found in the secreted. It localises to the cell membrane. It carries out the reaction acetylcholine + H2O = choline + acetate + H(+). Rapidly hydrolyzes choline released into the synapse. This is Acetylcholinesterase 4 (ace-4) from Caenorhabditis briggsae.